The sequence spans 391 residues: Phosphoglycerate kinase (391 aa).

Substrate contacts are provided by residues 21–23 (DLN), arginine 36, 59–62 (HLGR), arginine 113, and arginine 146. ATP contacts are provided by residues lysine 197, glutamate 319, and 345-348 (GGDT).

It belongs to the phosphoglycerate kinase family. As to quaternary structure, monomer.

It localises to the cytoplasm. It catalyses the reaction (2R)-3-phosphoglycerate + ATP = (2R)-3-phospho-glyceroyl phosphate + ADP. It functions in the pathway carbohydrate degradation; glycolysis; pyruvate from D-glyceraldehyde 3-phosphate: step 2/5. This chain is Phosphoglycerate kinase, found in Xanthomonas oryzae pv. oryzae (strain MAFF 311018).